Reading from the N-terminus, the 658-residue chain is Transcription factor E2-alpha (658 aa).

Disordered stretches follow at residues 42–82 (STQF…GTHY), 140–191 (SALS…YPAN), 276–313 (NPSV…GTAT), 331–372 (DHSS…SYDG), 460–558 (VPAQ…ERRV), and 628–658 (EEEK…VGHM). A Nuclear localization signal motif is present at residues 173-179 (PKKVRKV). The span at 276 to 303 (NPSVTSSFSSTPAQYGVSSHTPPISTGD) shows a compositional bias: polar residues. Residues 333–344 (SSTNFSSTPSTP) are compositionally biased toward low complexity. Over residues 345–355 (VGSPQGITGSG) the composition is skewed to polar residues. The segment covering 493–507 (PDIKRESKEDEENRS) has biased composition (basic and acidic residues). Over residues 533–544 (QDEDEDEDDDNL) the composition is skewed to acidic residues. Positions 548–558 (QKAEREKERRV) are enriched in basic and acidic residues. Residues 555-608 (ERRVANNARERLRVKDINEAFKELGRMCQLHLNSEKPQTKLLILHQAVSVILSL) form the bHLH domain.

Homodimer. Heterodimer; efficient DNA binding requires dimerization with another bHLH protein. Interacts with tgfb1i1.

Its subcellular location is the nucleus. Functionally, transcriptional regulator involved in the initiation of neuronal differentiation and mesenchymal to epithelial transition. Heterodimers between tcf3 and tissue-specific basic helix-loop-helix (bHLH) proteins play major roles in determining tissue-specific cell fate during embryogenesis, like muscle or early B-cell differentiation. Together with tcf15, required for the mesenchymal to epithelial transition. Dimers bind DNA on E-box motifs: 5'-CANNTG-3'. The polypeptide is Transcription factor E2-alpha (tcf3) (Xenopus laevis (African clawed frog)).